A 535-amino-acid chain; its full sequence is MSLLLEEIIRSVEALLKLRNRNQEPYVDPNLNPVLLVPGIAGSILNAVDHENGNEERVWVRIFGADHEFRTKMWSRFDPSTGKTISLDPKTSIVVPQDRAGLHAIDVLDPDMIVGRESVYYFHEMIVEMIGWGFEEGKTLFGFGYDFRQSNRLQETLDQFAKKLETVYKASGEKKINVISHSMGGLLVKCFMGLHSDIFEKYVQNWIAIAAPFRGAPGYITSTLLNGMSFVNGWEQNFFVSKWSMHQLLIECPSIYELMCCPYFKWELPPVLELWREKESNDGVGTSYVVLESYCSLESLEVFTKSLSNNTADYCGESIDLPFNWKIMEWAHKTKQVLASAKLPPKVKFYNIYGTNLETPHSVCYGNEKMPVKDLTNLRYFQPTYICVDGDGTVPMESAMADGLEAVARVGVPGEHRGILNDHRVFRMLKKWLNVGEPDPFYNPVNDYVILPTTYEFEKFHENGLEVASVKESWDIISDDNNIGTTGSTVNSISVSQPGDDQNPQAEARATLTVQPQSDGRQHVELNAVSVSVDA.

S2 bears the N-acetylserine mark. S182 acts as the Acyl-ester intermediate in catalysis. Residues D391 and H416 each act as charge relay system in the active site. Polar residues predominate over residues 488-505; sequence STVNSISVSQPGDDQNPQ. Residues 488–507 are disordered; sequence STVNSISVSQPGDDQNPQAE.

It belongs to the AB hydrolase superfamily. Lipase family.

The sequence is that of Lecithin-cholesterol acyltransferase-like 4 (LCAT4) from Arabidopsis thaliana (Mouse-ear cress).